A 363-amino-acid chain; its full sequence is Fructose-bisphosphate aldolase C (363 aa).

Residue Y5 is modified to Phosphotyrosine. 3 positions are modified to phosphoserine: S36, S39, and S45. R56 serves as a coordination point for substrate. K111 carries the N6-acetyllysine modification. Residue K147 participates in substrate binding. Catalysis depends on E188, which acts as the Proton acceptor. The active-site Schiff-base intermediate with dihydroxyacetone-P is the K230.

It belongs to the class I fructose-bisphosphate aldolase family. As to quaternary structure, homotetramer. Interacts with ATP6V1E1. High expression in the adult brain.

It catalyses the reaction beta-D-fructose 1,6-bisphosphate = D-glyceraldehyde 3-phosphate + dihydroxyacetone phosphate. It participates in carbohydrate degradation; glycolysis; D-glyceraldehyde 3-phosphate and glycerone phosphate from D-glucose: step 4/4. The chain is Fructose-bisphosphate aldolase C (Aldoc) from Rattus norvegicus (Rat).